A 230-amino-acid polypeptide reads, in one-letter code: Octanoyltransferase (230 aa).

Residues 38–215 (AGGADTLLLL…AVCAALDGVL (178 aa)) enclose the BPL/LPL catalytic domain. Substrate is bound by residues 76-83 (RGGKITWH), 145-147 (AIG), and 158-160 (GFA). C176 functions as the Acyl-thioester intermediate in the catalytic mechanism.

It belongs to the LipB family.

Its subcellular location is the cytoplasm. It carries out the reaction octanoyl-[ACP] + L-lysyl-[protein] = N(6)-octanoyl-L-lysyl-[protein] + holo-[ACP] + H(+). It functions in the pathway protein modification; protein lipoylation via endogenous pathway; protein N(6)-(lipoyl)lysine from octanoyl-[acyl-carrier-protein]: step 1/2. Its function is as follows. Catalyzes the transfer of endogenously produced octanoic acid from octanoyl-acyl-carrier-protein onto the lipoyl domains of lipoate-dependent enzymes. Lipoyl-ACP can also act as a substrate although octanoyl-ACP is likely to be the physiological substrate. The protein is Octanoyltransferase of Mycobacterium tuberculosis (strain ATCC 25177 / H37Ra).